Consider the following 251-residue polypeptide: MSDDSSNSTHFGYKTVEAEKKADMVAGVFHSVAAKYDIMNDVMSFGIHRMWKRFTIESAGARPGMKVLDLAGGTGDLTAKFSRIVGETGQVTLADINDSMLKVGREKLRDKGIVGNVNYVQANAEALPFPDNHFDIITIAFGLRNVTNKDAAIASMLRVLKPGGKLLVLEFSKPQHEIMRKIYDIYSFKVLPKMGSLITKDADSYEYLAESIRMHPDQDTLKQMMEDAGFEQVNYTNMTDGIVALHKGYKF.

Residues T74, D95, and 123-124 (NA) each bind S-adenosyl-L-methionine.

It belongs to the class I-like SAM-binding methyltransferase superfamily. MenG/UbiE family.

The catalysed reaction is a 2-demethylmenaquinol + S-adenosyl-L-methionine = a menaquinol + S-adenosyl-L-homocysteine + H(+). It carries out the reaction a 2-methoxy-6-(all-trans-polyprenyl)benzene-1,4-diol + S-adenosyl-L-methionine = a 5-methoxy-2-methyl-3-(all-trans-polyprenyl)benzene-1,4-diol + S-adenosyl-L-homocysteine + H(+). It participates in quinol/quinone metabolism; menaquinone biosynthesis; menaquinol from 1,4-dihydroxy-2-naphthoate: step 2/2. Its pathway is cofactor biosynthesis; ubiquinone biosynthesis. Its function is as follows. Methyltransferase required for the conversion of demethylmenaquinol (DMKH2) to menaquinol (MKH2) and the conversion of 2-polyprenyl-6-methoxy-1,4-benzoquinol (DDMQH2) to 2-polyprenyl-3-methyl-6-methoxy-1,4-benzoquinol (DMQH2). This is Ubiquinone/menaquinone biosynthesis C-methyltransferase UbiE from Shewanella pealeana (strain ATCC 700345 / ANG-SQ1).